Here is a 72-residue protein sequence, read N- to C-terminus: Translation initiation factor IF-1 (72 aa).

One can recognise an S1-like domain in the interval 1–72 (MSDKSIKMQA…SNGRITYRHK (72 aa)).

It belongs to the IF-1 family. In terms of assembly, component of the 30S ribosomal translation pre-initiation complex which assembles on the 30S ribosome in the order IF-2 and IF-3, IF-1 and N-formylmethionyl-tRNA(fMet); mRNA recruitment can occur at any time during PIC assembly.

It localises to the cytoplasm. Its function is as follows. One of the essential components for the initiation of protein synthesis. Stabilizes the binding of IF-2 and IF-3 on the 30S subunit to which N-formylmethionyl-tRNA(fMet) subsequently binds. Helps modulate mRNA selection, yielding the 30S pre-initiation complex (PIC). Upon addition of the 50S ribosomal subunit IF-1, IF-2 and IF-3 are released leaving the mature 70S translation initiation complex. The sequence is that of Translation initiation factor IF-1 from Mycoplasmopsis pulmonis (strain UAB CTIP) (Mycoplasma pulmonis).